Reading from the N-terminus, the 57-residue chain is Defensin-like protein 302 (57 aa).

Intrachain disulfides connect cysteine 19–cysteine 39, cysteine 26–cysteine 44, and cysteine 32–cysteine 46.

It belongs to the DEFL family.

In Arabidopsis thaliana (Mouse-ear cress), this protein is Defensin-like protein 302.